Here is a 164-residue protein sequence, read N- to C-terminus: Cyclic pyranopterin monophosphate synthase (164 aa).

Substrate contacts are provided by residues 75 to 77 (MCH) and 116 to 117 (ME). D131 is a catalytic residue.

This sequence belongs to the MoaC family. As to quaternary structure, homohexamer; trimer of dimers.

The catalysed reaction is (8S)-3',8-cyclo-7,8-dihydroguanosine 5'-triphosphate = cyclic pyranopterin phosphate + diphosphate. It participates in cofactor biosynthesis; molybdopterin biosynthesis. In terms of biological role, catalyzes the conversion of (8S)-3',8-cyclo-7,8-dihydroguanosine 5'-triphosphate to cyclic pyranopterin monophosphate (cPMP). This Staphylococcus aureus (strain MRSA252) protein is Cyclic pyranopterin monophosphate synthase.